Consider the following 715-residue polypeptide: Coiled-coil domain-containing protein 13 (715 aa).

Coiled-coil stretches lie at residues 16–105 and 134–458; these read KAMQ…KERD and ATKI…NVHY. A disordered region spans residues 20 to 65; sequence EMQHKRLQKQMEKKREKELSLKSRADDQEEPLEVSDGLSLLHAGEP. Positions 28 to 45 are enriched in basic and acidic residues; the sequence is KQMEKKREKELSLKSRAD. A phosphoserine mark is found at serine 258, serine 469, and serine 536. Disordered stretches follow at residues 482-541 and 607-645; these read EDPG…EQKG and LEPG…DPSF. A coiled-coil region spans residues 554-608; it reads QAAEVERDRLTEFVTVLQKRVEESNSKLLESERKLQEERHRTVVLEQHLEKIRLE. Over residues 625–637 the composition is skewed to polar residues; the sequence is GLPTSNNRHNPTG. Residues 653 to 683 are a coiled coil; that stretch reads VESQMEELTTRLAIQVEENEMLKAALGSALR.

As to quaternary structure, interacts with PCM1, CEP290 and PCNT.

Its subcellular location is the cytoplasm. It is found in the cytoskeleton. It localises to the microtubule organizing center. The protein localises to the centrosome. The protein resides in the centriolar satellite. Its subcellular location is the cilium basal body. In terms of biological role, required for primary cilia formation and promotes the localization of the ciliopathy protein BBS4 to both centriolar satellites and cilia. The chain is Coiled-coil domain-containing protein 13 from Homo sapiens (Human).